Consider the following 233-residue polypeptide: Merozoite surface protein 1 (233 aa).

The first 19 residues, 1–19 (MKIIFFLCSFLFFIINTQC), serve as a signal peptide directing secretion. Polar residues predominate over residues 58–67 (SGTAVTTSTP). Residues 58–110 (SGTAVTTSTPGSKGSVASGGSGGSVASGGSVASGGSGNSRRTNPSDNSSDSDA) form a disordered region. Positions 74–94 (ASGGSGGSVASGGSVASGGSG) are enriched in gly residues. Positions 95–107 (NSRRTNPSDNSSD) are enriched in polar residues. Residue asparagine 104 is glycosylated (N-linked (GlcNAc...) asparagine).

Forms a complex composed of subunits p83, p30, p38, and p42 which remain non-covalently associated; the complex is formed at the merozoite surface prior to egress from host erythrocytes. Forms a complex composed of processed MSP1 subunits, MSP6 subunit p36 and MSP7; the complex is formed at the merozoite surface prior to egress from host erythrocytes. Within the complex, interacts (via subunit p38) with MSP6 subunit p36 and (via subunits p83, p30 and p38) with MSP7 (via subunit p22). Forms a complex composed of MSP1, MSP6, DBLMSP1 and DBLMSP2. Within the complex, interacts (via subunit p38) with DBLMSP1 and DBLMSP2. Forms a complex composed of MSP1, and rhoptry proteins RhopH3, RAP1 and CLAG9/RhopH3. Within the complex, interacts (via subunits p42 and p19) with RhopH3 (via C-terminus). Forms a complex composed of MSP1, MSP6, MSP7, MSP9 and MSP3; within the complex, MSP6 and MSP9 mediate the binding to the host erythrocyte. Interacts (via subunits p19 and p42) with MSP9; the interaction is direct; MSP1 subunits p19 or p42, and MSP9 form a co-ligand complex that interacts with host SLC4A1/Band 3 protein. May interact with PFD6. Interacts with host spectrin. In terms of processing, the p190 precursor is cleaved by SUB1 prior to merozoite egress into 4 subunits p83, p30, p38, and p42 which remain non-covalently associated. SUB1-mediated proteolytic cleavage occurs in an orderly manner; the first cleavage occurs at the p83/p30 site, followed by cleavage at the p30/p38 site, the last cleavage occurs at the p38/p42 site. The order of cleavage is essential for parasite viability. SUB1-mediated processing is essential for merozoite egress. In a second processing step during erythrocyte invasion, p42 is cleaved by SUB2 into p33 and p19; the latter remains attached to the merozoite surface via its GPI-anchor and stays on the surface during the subsequent ring stage.

It localises to the cell membrane. It is found in the secreted. Its function is as follows. During the asexual blood stage, involved in merozoite egress from host erythrocytes possibly via its interaction with the host cytoskeleton protein spectrin resulting in the destabilization of the host cytoskeleton and thus leading to erythrocyte cell membrane rupture. Involved in the binding to host erythrocytes and is required for host erythrocyte invasion. This is Merozoite surface protein 1 from Plasmodium falciparum (isolate CDC / Honduras).